A 244-amino-acid chain; its full sequence is 3-oxoacyl-[acyl-carrier-protein] reductase FabG (244 aa).

Residues 12 to 15 (GASR) and Thr37 each bind NADP(+). Ca(2+) is bound by residues Gly50 and Gly53. NADP(+) contacts are provided by residues 59–60 (NV) and Asn86. A substrate-binding site is contributed by Ser138. Ca(2+) is bound at residue Asn145. Tyr151 functions as the Proton acceptor in the catalytic mechanism. Residues 151–155 (YAAAK) and Ile184 each bind NADP(+). Positions 233 and 234 each coordinate Ca(2+).

It belongs to the short-chain dehydrogenases/reductases (SDR) family. Homotetramer.

The catalysed reaction is a (3R)-hydroxyacyl-[ACP] + NADP(+) = a 3-oxoacyl-[ACP] + NADPH + H(+). It carries out the reaction 3-oxobutanoyl-[ACP] + NADPH + H(+) = (3R)-hydroxybutanoyl-[ACP] + NADP(+). It catalyses the reaction 3-oxopentanoyl-[ACP] + NADPH + H(+) = (3R)-hydroxypentanoyl-[ACP] + NADP(+). The enzyme catalyses 3-oxohexanoyl-[ACP] + NADPH + H(+) = (3R)-hydroxyhexanoyl-[ACP] + NADP(+). The catalysed reaction is 3-oxoheptanoyl-[ACP] + NADPH + H(+) = (3R)-hydroxyheptanoyl-[ACP] + NADP(+). It carries out the reaction 3-oxooctanoyl-[ACP] + NADPH + H(+) = (3R)-hydroxyoctanoyl-[ACP] + NADP(+). It catalyses the reaction 3-oxononanoyl-[ACP] + NADPH + H(+) = (3R)-hydroxynonanoyl-[ACP] + NADP(+). The enzyme catalyses 3-oxodecanoyl-[ACP] + NADPH + H(+) = (3R)-hydroxydecanoyl-[ACP] + NADP(+). The catalysed reaction is 3-oxohexadecanoyl-[ACP] + NADPH + H(+) = (3R)-hydroxyhexadecanoyl-[ACP] + NADP(+). It carries out the reaction 3-oxo-(9Z)-hexadecenoyl-[ACP] + NADPH + H(+) = (3R)-hydroxy-(9Z)-hexadecenoyl-[ACP] + NADP(+). It catalyses the reaction 4-methyl-3-oxopentanoyl-[ACP] + NADPH + H(+) = (3R)-hydroxy-4-methylpentanoyl-[ACP] + NADP(+). The enzyme catalyses 5-methyl-3-oxohexanoyl-[ACP] + NADPH + H(+) = (3R)-hydroxy-5-methylhexanoyl-[ACP] + NADP(+). The catalysed reaction is 4-methyl-3-oxohexanoyl-[ACP] + NADPH + H(+) = (3R)-hydroxy-4-methylhexanoyl-[ACP] + NADP(+). Its pathway is lipid metabolism; fatty acid biosynthesis. Inhibited by cinnamic acid derivatives. Its function is as follows. Catalyzes the NADPH-dependent reduction of beta-ketoacyl-ACP substrates to beta-hydroxyacyl-ACP products, the first reductive step in the elongation cycle of fatty acid biosynthesis. The protein is 3-oxoacyl-[acyl-carrier-protein] reductase FabG (fabG) of Escherichia coli (strain K12).